A 184-amino-acid chain; its full sequence is Gastrokine-2 (184 aa).

Residues 1–20 (MKSLVAFLVVLSILRIQSQA) form the signal peptide. The 98-residue stretch at 54–151 (HSGSCSSTTI…LCKHIPLYEG (98 aa)) folds into the BRICHOS domain. Cysteine 81 and cysteine 143 are oxidised to a cystine.

As to quaternary structure, heterodimer with TFF1; disulfide linked. Interacts with TFF2.

It is found in the secreted. The protein is Gastrokine-2 (Gkn2) of Rattus norvegicus (Rat).